A 332-amino-acid polypeptide reads, in one-letter code: Phosphate acyltransferase (332 aa).

This sequence belongs to the PlsX family. Homodimer. Probably interacts with PlsY.

The protein localises to the cytoplasm. The enzyme catalyses a fatty acyl-[ACP] + phosphate = an acyl phosphate + holo-[ACP]. It participates in lipid metabolism; phospholipid metabolism. In terms of biological role, catalyzes the reversible formation of acyl-phosphate (acyl-PO(4)) from acyl-[acyl-carrier-protein] (acyl-ACP). This enzyme utilizes acyl-ACP as fatty acyl donor, but not acyl-CoA. The protein is Phosphate acyltransferase of Streptococcus sanguinis (strain SK36).